Consider the following 433-residue polypeptide: Histidinol dehydrogenase (433 aa).

NAD(+)-binding residues include Y129, Q191, and N214. The substrate site is built by S237, Q259, and H262. Residues Q259 and H262 each coordinate Zn(2+). Catalysis depends on proton acceptor residues E326 and H327. Substrate-binding residues include H327, D360, E414, and H419. Zn(2+) is bound at residue D360. H419 contributes to the Zn(2+) binding site.

It belongs to the histidinol dehydrogenase family. Requires Zn(2+) as cofactor.

The enzyme catalyses L-histidinol + 2 NAD(+) + H2O = L-histidine + 2 NADH + 3 H(+). The protein operates within amino-acid biosynthesis; L-histidine biosynthesis; L-histidine from 5-phospho-alpha-D-ribose 1-diphosphate: step 9/9. Functionally, catalyzes the sequential NAD-dependent oxidations of L-histidinol to L-histidinaldehyde and then to L-histidine. The protein is Histidinol dehydrogenase of Methanosarcina mazei (strain ATCC BAA-159 / DSM 3647 / Goe1 / Go1 / JCM 11833 / OCM 88) (Methanosarcina frisia).